A 938-amino-acid chain; its full sequence is Protein translocase subunit SecA (938 aa).

ATP contacts are provided by residues Q90, 108 to 112, and D504; that span reads GEGKT.

Belongs to the SecA family. As to quaternary structure, monomer and homodimer. Part of the essential Sec protein translocation apparatus which comprises SecA, SecYEG and auxiliary proteins SecDF. Other proteins may also be involved.

Its subcellular location is the cell inner membrane. It localises to the cellular thylakoid membrane. The protein resides in the cytoplasm. It catalyses the reaction ATP + H2O + cellular proteinSide 1 = ADP + phosphate + cellular proteinSide 2.. In terms of biological role, part of the Sec protein translocase complex. Interacts with the SecYEG preprotein conducting channel. Has a central role in coupling the hydrolysis of ATP to the transfer of proteins into and across the cell membrane, serving as an ATP-driven molecular motor driving the stepwise translocation of polypeptide chains across the membrane. Functionally, probably participates in protein translocation into and across both the cytoplasmic and thylakoid membranes in cyanobacterial cells. The protein is Protein translocase subunit SecA of Microcystis aeruginosa (strain NIES-843 / IAM M-2473).